Reading from the N-terminus, the 354-residue chain is Uroporphyrinogen decarboxylase (354 aa).

Substrate-binding positions include 27 to 31 (RQAGR), Asp77, Tyr154, Thr209, and His327.

The protein belongs to the uroporphyrinogen decarboxylase family. As to quaternary structure, homodimer.

It localises to the cytoplasm. It carries out the reaction uroporphyrinogen III + 4 H(+) = coproporphyrinogen III + 4 CO2. The protein operates within porphyrin-containing compound metabolism; protoporphyrin-IX biosynthesis; coproporphyrinogen-III from 5-aminolevulinate: step 4/4. Functionally, catalyzes the decarboxylation of four acetate groups of uroporphyrinogen-III to yield coproporphyrinogen-III. The protein is Uroporphyrinogen decarboxylase of Sodalis glossinidius (strain morsitans).